A 235-amino-acid polypeptide reads, in one-letter code: Ribonuclease PH (235 aa).

Phosphate is bound by residues R86 and 124–126; that span reads GTR.

It belongs to the RNase PH family. Homohexameric ring arranged as a trimer of dimers.

The catalysed reaction is tRNA(n+1) + phosphate = tRNA(n) + a ribonucleoside 5'-diphosphate. Its function is as follows. Phosphorolytic 3'-5' exoribonuclease that plays an important role in tRNA 3'-end maturation. Removes nucleotide residues following the 3'-CCA terminus of tRNAs; can also add nucleotides to the ends of RNA molecules by using nucleoside diphosphates as substrates, but this may not be physiologically important. Probably plays a role in initiation of 16S rRNA degradation (leading to ribosome degradation) during starvation. The sequence is that of Ribonuclease PH from Francisella tularensis subsp. tularensis (strain FSC 198).